The primary structure comprises 221 residues: Large ribosomal subunit protein uL4 (221 aa).

The segment at 48 to 77 (TASTKTRGEVSGGGRKPWIQKHTGRARQGS) is disordered.

It belongs to the universal ribosomal protein uL4 family. As to quaternary structure, part of the 50S ribosomal subunit.

Its function is as follows. One of the primary rRNA binding proteins, this protein initially binds near the 5'-end of the 23S rRNA. It is important during the early stages of 50S assembly. It makes multiple contacts with different domains of the 23S rRNA in the assembled 50S subunit and ribosome. Functionally, forms part of the polypeptide exit tunnel. The protein is Large ribosomal subunit protein uL4 of Thermosipho africanus (strain TCF52B).